A 150-amino-acid chain; its full sequence is Arginine repressor (150 aa).

It belongs to the ArgR family.

The protein localises to the cytoplasm. Its pathway is amino-acid biosynthesis; L-arginine biosynthesis [regulation]. In terms of biological role, regulates arginine biosynthesis genes. The protein is Arginine repressor of Finegoldia magna (strain ATCC 29328 / DSM 20472 / WAL 2508) (Peptostreptococcus magnus).